Here is an 898-residue protein sequence, read N- to C-terminus: Metalloprotease StcE (898 aa).

The N-terminal stretch at 1–35 is a signal peptide; the sequence is MNTKMNERWRTPMKLKYLSCTILAPLAIGVFSATA. The 256-residue stretch at 296–551 folds into the Peptidase M66 domain; it reads ELLLHTIDIG…QRFFENKAVF (256 aa). Position 446 (His446) interacts with Zn(2+). Glu447 is an active-site residue. Zn(2+) contacts are provided by His450 and His456.

Requires Zn(2+) as cofactor.

It localises to the secreted. Inhibited by divalent cation chelators such as BPS and EDTA. Functionally, virulence factor that contributes to intimate adherence of enterohemorrhagic E.coli (EHEC) O157:H7 to host cells. Is able to cleave the secreted human mucin 7 (MUC7) and the glycoprotein 340 (DMBT1/GP340). Also cleaves human C1 inhibitor (SERPING1), a regulator of multiple inflammatory pathways, and binds and localizes it to bacterial and host cell surfaces, protecting them from complement-mediated lysis. Therefore, the current model proposes two roles for StcE during infection: it acts first as a mucinase, allowing passage of EHEC through the oral cavity by cleaving the salivary glycoproteins that are responsible for bacterial aggregation. Similarly, in the colon, StcE cleaves the glycoproteins that protect the intestinal epithelial surface, allowing EHEC to come into close contact with host cell membranes. Secondly, it acts as an anti-inflammatory agent by localizing SERPING1 to cell membranes. This Escherichia coli O157:H7 protein is Metalloprotease StcE (stcE).